Consider the following 394-residue polypeptide: Elongation factor Tu 1 (394 aa).

The tr-type G domain maps to Lys10–Glu204. The interval Gly19 to Thr26 is G1. Position 19-26 (Gly19–Thr26) interacts with GTP. Mg(2+) is bound at residue Thr26. Residues Gly60 to Asn64 form a G2 region. Residues Asp81–Gly84 form a G3 region. Residues Asp81 to His85 and Asn136 to Asp139 each bind GTP. The tract at residues Asn136–Asp139 is G4. A G5 region spans residues Ser174–Leu176.

Belongs to the TRAFAC class translation factor GTPase superfamily. Classic translation factor GTPase family. EF-Tu/EF-1A subfamily. Monomer.

It localises to the cytoplasm. The enzyme catalyses GTP + H2O = GDP + phosphate + H(+). Functionally, GTP hydrolase that promotes the GTP-dependent binding of aminoacyl-tRNA to the A-site of ribosomes during protein biosynthesis. The chain is Elongation factor Tu 1 from Shewanella oneidensis (strain ATCC 700550 / JCM 31522 / CIP 106686 / LMG 19005 / NCIMB 14063 / MR-1).